A 297-amino-acid polypeptide reads, in one-letter code: IMPACT family member C14C8.09c (297 aa).

Positions 225–255 (LRSELQEKNQKDKKKEVNKLEEKMTNAKEPN) form a coiled coil. Composition is skewed to basic and acidic residues over residues 228-250 (ELQEKNQKDKKKEVNKLEEKMTN) and 280-297 (SVDHKEASKIIKDVEKEE). The interval 228–297 (ELQEKNQKDK…KIIKDVEKEE (70 aa)) is disordered.

Belongs to the IMPACT family.

The sequence is that of IMPACT family member C14C8.09c from Schizosaccharomyces pombe (strain 972 / ATCC 24843) (Fission yeast).